The primary structure comprises 461 residues: tRNA modification GTPase MnmE (461 aa).

Positions 20, 85, and 124 each coordinate (6S)-5-formyl-5,6,7,8-tetrahydrofolate. A TrmE-type G domain is found at 221–383 (GIPVAIIGET…LQQLLTEVSS (163 aa)). Asn231 lines the K(+) pocket. Residues 231–236 (NAGKST), 250–256 (SDIHGTT), and 275–278 (DTAG) contribute to the GTP site. Residue Ser235 participates in Mg(2+) binding. Residues Ser250, Ile252, and Thr255 each coordinate K(+). Thr256 lines the Mg(2+) pocket. Lys461 serves as a coordination point for (6S)-5-formyl-5,6,7,8-tetrahydrofolate.

The protein belongs to the TRAFAC class TrmE-Era-EngA-EngB-Septin-like GTPase superfamily. TrmE GTPase family. Homodimer. Heterotetramer of two MnmE and two MnmG subunits. K(+) serves as cofactor.

The protein localises to the cytoplasm. In terms of biological role, exhibits a very high intrinsic GTPase hydrolysis rate. Involved in the addition of a carboxymethylaminomethyl (cmnm) group at the wobble position (U34) of certain tRNAs, forming tRNA-cmnm(5)s(2)U34. This Parabacteroides distasonis (strain ATCC 8503 / DSM 20701 / CIP 104284 / JCM 5825 / NCTC 11152) protein is tRNA modification GTPase MnmE.